The chain runs to 126 residues: Small ribosomal subunit protein uS13 (126 aa).

The disordered stretch occupies residues 98–126; that stretch reads PLRGQSTKNNARTRKGKKKTVANKKKATK. The span at 108 to 126 shows a compositional bias: basic residues; the sequence is ARTRKGKKKTVANKKKATK.

It belongs to the universal ribosomal protein uS13 family. In terms of assembly, part of the 30S ribosomal subunit. Forms a loose heterodimer with protein S19. Forms two bridges to the 50S subunit in the 70S ribosome.

In terms of biological role, located at the top of the head of the 30S subunit, it contacts several helices of the 16S rRNA. In the 70S ribosome it contacts the 23S rRNA (bridge B1a) and protein L5 of the 50S subunit (bridge B1b), connecting the 2 subunits; these bridges are implicated in subunit movement. Contacts the tRNAs in the A and P-sites. The chain is Small ribosomal subunit protein uS13 from Parabacteroides distasonis (strain ATCC 8503 / DSM 20701 / CIP 104284 / JCM 5825 / NCTC 11152).